Reading from the N-terminus, the 92-residue chain is Small ribosomal subunit protein uS19 (92 aa).

Belongs to the universal ribosomal protein uS19 family.

Its function is as follows. Protein S19 forms a complex with S13 that binds strongly to the 16S ribosomal RNA. The protein is Small ribosomal subunit protein uS19 of Cellvibrio japonicus (strain Ueda107) (Pseudomonas fluorescens subsp. cellulosa).